A 180-amino-acid chain; its full sequence is Ribosome maturation factor RimM (180 aa).

One can recognise a PRC barrel domain in the interval 97–176 (EGEFFYCDLI…KITTNNAKTL (80 aa)).

Belongs to the RimM family. Binds ribosomal protein uS19.

Its subcellular location is the cytoplasm. Functionally, an accessory protein needed during the final step in the assembly of 30S ribosomal subunit, possibly for assembly of the head region. Essential for efficient processing of 16S rRNA. May be needed both before and after RbfA during the maturation of 16S rRNA. It has affinity for free ribosomal 30S subunits but not for 70S ribosomes. The chain is Ribosome maturation factor RimM from Helicobacter acinonychis (strain Sheeba).